The chain runs to 270 residues: MSSNELVEQIMAQVIARVATPEQQAIPGQPQPIRETAMAEKSCSLTEFVGTAIGDTLGLVIANVDTALLDAMKLEKRYRSIGILGARTGAGPHIMAADEAVKATNTEVVSIELPRDTKGGAGHGSLIILGGNDVSDVKRGIEVALKELDRTFGDVYGNEAGHIELQYTARASYALEKAFGAPIGRACGIIVGAPASVGVLMADTALKSANVEVVAYSSPAHGTSFSNEAILVISGDSGAVRQAVTSAREIGKTVLATLGSEPKNDRPSYI.

Residues 6-18 form a probable helix that binds cargo to the BMC shell region; sequence LVEQIMAQVIARV. 2 consecutive BMC circularly permuted domains span residues 47–152 and 154–258; these read EFVG…DRTF and DVYG…LATL.

It belongs to the EutL/PduB family. As to quaternary structure, homotrimerizes to form a pseudohexamer with a central pore. The trimers pack into an array. In terms of processing, in purified BMCs seen as a 28.0 kDa and 25.0 kDa form, both of which have been N-terminally sequenced and whose N-fMet is removed; the smaller form is called PduB'.

It is found in the bacterial microcompartment. The protein operates within polyol metabolism; 1,2-propanediol degradation. Its function is as follows. The two proteins produced are among the major shell proteins of the bacterial microcompartment (BMC) dedicated to 1,2-propanediol (1,2-PD) degradation. Required for structural integrity of BMCs and to mitigate propionaldehyde toxicity. The N-terminal 13 residues are important for correct assembly of the BMC shell. The isolated BMC shell component protein ratio for J:A:B':B:K:T:U is approximately 15:10:7:6:1:1:2. The N-terminus of the long form (PduB) is required for correct formation of BMCs, deletions in the first 37 residues have substantially reduced levels of the major lumen enzymes. May play a major role in binding the enzyme contents to the shell. The 1,2-PD-specific bacterial microcompartment (BMC) concentrates low levels of 1,2-PD catabolic enzymes, concentrates volatile reaction intermediates thus enhancing pathway flux and keeps the level of toxic, mutagenic propionaldehyde low. The polypeptide is Bacterial microcompartment shell protein PduB (Salmonella typhimurium (strain LT2 / SGSC1412 / ATCC 700720)).